Consider the following 737-residue polypeptide: MISVTDIRRAFLDNECHTITKAFGYLHEDKAIALIKIGFHPTYIPKVLYNNVVEFVPEKLYLFKPRTVSPLDLISTITKLKNVDKFAAHINYHKNSILITGDKSLIVKCMPYMIISDDDIRFIREQFVGTNSIEYILSFINKESVYRMSYQFSENEIVTIINRDHFMYEPIYEHQVLDSDFLKTMLDRYGIVPINSGIIDDLCPEAIIEILMAVVRPRDAIRFLDIVNKNQLTENSVKNYIINDIRRGKIDYYIPYVEDFLEDRTEDLGIYANIFFEDAIDITKLDITKTELEHISKYMNYYTTYIDHIVNIILQNNYIDILASIIDYVQDVLTEELCIRIVCESTNPVPVTSLPIHSTLVMVMCIQMKYVDIVEFLDEIDIDTLIEKGADPITEYTFTTRWYNKHNDLITLYIKKYGFCPMMMKRLMFEYPLTKEASDHLLKTMDENRGAIMFFPRTIYTLPYLLCCNYKLIQKPIPFKEENRNIEYKKTNRVLCFDSLENAAFKSLIKIDSIPGLKTYNMKDITYEKSNDIICVRFIPQDSIHNEERRIKLQLFDIARLASYGLYYIPSRYLSLWTPVVNMIEGREYTNPQKIECLVILDLFSEEFIEYQNLGNAVSNKYELEYTISNYQAAINCLMSTLLIYLVLGSIRSISRTEDFVLSILNIFYKGLKINELLSEPVSGVCIELDKIKDRASSGDSSFIFLKKNELSKTLSLCEKVCVETILDNNQSFKSSK.

An N-acetylmethionine; by host modification is found at Met1. Cysteines 496 and 535 form a disulfide.

This sequence belongs to the orthopoxvirus OPG064 family. In terms of assembly, interacts with host KLC2; this interaction promotes IEV trafficking by engaging the host kinesin-1 complex. Interacts with protein OPG056. N-acetylated on initiator methionine by host.

Functionally, plays a role in intracellular enveloped virus (IEV) transport to the cell surface on microtubules. Together with protein OPG056, forms a complex that interacts with host KLC2 (kinesin light chain isoform 2) to engage the kinesin-1 complex and thereby promote IEV trafficking. This chain is Protein OPG064 (OPG064), found in Monkeypox virus.